A 341-amino-acid polypeptide reads, in one-letter code: Methionine import ATP-binding protein MetN 1 (341 aa).

The region spanning 2–241 (IKLNQIVKRY…PQHEVTKRFV (240 aa)) is the ABC transporter domain. An ATP-binding site is contributed by 38–45 (GFSGAGKS).

The protein belongs to the ABC transporter superfamily. Methionine importer (TC 3.A.1.24) family. As to quaternary structure, the complex is composed of two ATP-binding proteins (MetN), two transmembrane proteins (MetI) and a solute-binding protein (MetQ).

The protein resides in the cell membrane. It carries out the reaction L-methionine(out) + ATP + H2O = L-methionine(in) + ADP + phosphate + H(+). The enzyme catalyses D-methionine(out) + ATP + H2O = D-methionine(in) + ADP + phosphate + H(+). In terms of biological role, part of the ABC transporter complex MetNIQ involved in methionine import. Responsible for energy coupling to the transport system. In Staphylococcus epidermidis (strain ATCC 12228 / FDA PCI 1200), this protein is Methionine import ATP-binding protein MetN 1.